Here is a 167-residue protein sequence, read N- to C-terminus: DNA-directed RNA polymerase 19 kDa subunit (167 aa).

Residues 15–41 (DNDYKSYDEDDDSISDIGETSDDCCTT) are disordered. The span at 22 to 36 (DEDDDSISDIGETSD) shows a compositional bias: acidic residues.

Belongs to the poxviridae DNA-directed RNA polymerase 19 kDa subunit family. The DNA-dependent RNA polymerase used for intermediate and late genes expression consists of eight subunits (147) kDa, 133 kDa, 35 kDa, 30 kDa, 22 kDa, 19 kDa, 18 kDa and 7 kDa totalling more than 500 kDa in mass. The same holoenzyme, with the addition of the transcription-specificity factor RAP94, is used for early gene expression.

The protein resides in the virion. It catalyses the reaction RNA(n) + a ribonucleoside 5'-triphosphate = RNA(n+1) + diphosphate. Functionally, part of the DNA-dependent RNA polymerase which catalyzes the transcription of viral DNA into RNA using the four ribonucleoside triphosphates as substrates. Responsible for the transcription of early, intermediate and late genes. DNA-dependent RNA polymerase associates with the early transcription factor (ETF) thereby allowing the early genes transcription. Late transcription, and probably also intermediate transcription, require newly synthesized RNA polymerase. This Vertebrata (FPV) protein is DNA-directed RNA polymerase 19 kDa subunit (RPO19).